The following is a 282-amino-acid chain: Phosphate import ATP-binding protein PstB (282 aa).

A compositionally biased stretch (polar residues) spans methionine 1–proline 25. The tract at residues methionine 1–alanine 26 is disordered. The ABC transporter domain maps to isoleucine 36 to valine 277. Glycine 68–serine 75 is a binding site for ATP.

Belongs to the ABC transporter superfamily. Phosphate importer (TC 3.A.1.7) family. In terms of assembly, the complex is composed of two ATP-binding proteins (PstB), two transmembrane proteins (PstC and PstA) and a solute-binding protein (PstS).

It is found in the cell inner membrane. It catalyses the reaction phosphate(out) + ATP + H2O = ADP + 2 phosphate(in) + H(+). Its function is as follows. Part of the ABC transporter complex PstSACB involved in phosphate import. Responsible for energy coupling to the transport system. In Rhodopirellula baltica (strain DSM 10527 / NCIMB 13988 / SH1), this protein is Phosphate import ATP-binding protein PstB.